A 263-amino-acid polypeptide reads, in one-letter code: Indolethylamine N-methyltransferase (263 aa).

Lys13 bears the N6-succinyllysine mark. Residues Tyr20, Tyr25, 63–64 (GS), Tyr69, Asp85, and Asn90 each bind S-adenosyl-L-methionine. Lys96 is subject to N6-succinyllysine. S-adenosyl-L-methionine contacts are provided by residues 142–143 (DA) and Leu163.

Belongs to the class I-like SAM-binding methyltransferase superfamily. NNMT/PNMT/TEMT family. Monomer. In terms of tissue distribution, highly expressed in lung, also detected in liver and at very low levels in brain.

Its subcellular location is the cytoplasm. The enzyme catalyses a tertiary amine + S-adenosyl-L-methionine = a methylated tertiary amine + S-adenosyl-L-homocysteine + H(+). The catalysed reaction is a secondary amine + S-adenosyl-L-methionine = a methylated secondary amine + S-adenosyl-L-homocysteine + H(+). It catalyses the reaction a primary amine + S-adenosyl-L-methionine = a methylated primary amine + S-adenosyl-L-homocysteine + H(+). It carries out the reaction dimethyl sulfide + S-adenosyl-L-methionine = trimethylsulfonium + S-adenosyl-L-homocysteine. In terms of biological role, catalyzes the N-methylation of tryptamine and structurally related compounds. Functions as a thioether S-methyltransferase and is active with a variety of thioethers and the corresponding selenium and tellurium compounds, including 3-methylthiopropionaldehyde, dimethyl selenide, dimethyl telluride, 2-methylthioethylamine, 2-methylthioethanol, methyl-n-propyl sulfide and diethyl sulfide. Plays an important role in the detoxification of selenium compounds. The polypeptide is Indolethylamine N-methyltransferase (INMT) (Oryctolagus cuniculus (Rabbit)).